We begin with the raw amino-acid sequence, 176 residues long: Large ribosomal subunit protein eL20 (176 aa).

Belongs to the eukaryotic ribosomal protein eL20 family. Component of the large ribosomal subunit.

Its subcellular location is the cytoplasm. Functionally, component of the large ribosomal subunit. The ribosome is a large ribonucleoprotein complex responsible for the synthesis of proteins in the cell. This chain is Large ribosomal subunit protein eL20 (rpl18a), found in Salmo salar (Atlantic salmon).